Consider the following 87-residue polypeptide: Small ribosomal subunit protein bS20 (87 aa).

The disordered stretch occupies residues 1-27 (MANIKSAKKRAIQSEKRRQHNASRRSM).

The protein belongs to the bacterial ribosomal protein bS20 family.

Binds directly to 16S ribosomal RNA. In Aeromonas salmonicida (strain A449), this protein is Small ribosomal subunit protein bS20.